Here is a 374-residue protein sequence, read N- to C-terminus: Guanine nucleotide-binding protein subunit alpha-15 (374 aa).

The region spanning 41-374 is the G-alpha domain; the sequence is GELKLLLLGP…ARYLDEINLL (334 aa). The segment at 44-57 is G1 motif; it reads KLLLLGPGESGKST. GTP contacts are provided by residues 49–56, 183–189, 208–212, 277–280, and A346; these read GPGESGKS, LRSRMPT, DAGGQ, and NKTD. Mg(2+)-binding residues include S56 and T189. The tract at residues 181 to 189 is G2 motif; that stretch reads DVLRSRMPT. The tract at residues 204 to 213 is G3 motif; the sequence is LRIVDAGGQK. Positions 273 to 280 are G4 motif; that stretch reads ILFLNKTD. The G5 motif stretch occupies residues 344 to 349; the sequence is TCATDT.

This sequence belongs to the G-alpha family. G(q) subfamily. G proteins are composed of 3 units; alpha, beta and gamma. The alpha chain contains the guanine nucleotide binding site.

Functionally, guanine nucleotide-binding proteins (G proteins) are involved as modulators or transducers in various transmembrane signaling systems. In Rattus norvegicus (Rat), this protein is Guanine nucleotide-binding protein subunit alpha-15 (Gna15).